The following is an 814-amino-acid chain: DNA topoisomerase 1 (814 aa).

Residues 1–12 (MSSSDSDSVSLS) show a composition bias toward low complexity. The segment at 1-180 (MSSSDSDSVS…PNDEEDEDED (180 aa)) is disordered. Positions 13–22 (IRRRQRRGSS) are enriched in basic residues. Phosphoserine occurs at positions 52, 54, and 136. Thr138 carries the post-translational modification Phosphothreonine. Interaction with DNA stretches follow at residues 404–405 (KY), 467–472 (RAGNEK), and 559–561 (SAK). The 404-residue stretch at 411–814 (GSSLKGQSDL…AADTPPDWKW (404 aa)) folds into the Topo IB-type catalytic domain. Tyr773 serves as the catalytic O-(3'-phospho-DNA)-tyrosine intermediate.

It belongs to the type IB topoisomerase family. As to quaternary structure, monomer.

It catalyses the reaction ATP-independent breakage of single-stranded DNA, followed by passage and rejoining.. In terms of biological role, releases the supercoiling and torsional tension of DNA introduced during the DNA replication and transcription by transiently cleaving and rejoining one strand of the DNA duplex. Introduces a single-strand break via transesterification at a target site in duplex DNA. The scissile phosphodiester is attacked by the catalytic tyrosine of the enzyme, resulting in the formation of a DNA-(3'-phosphotyrosyl)-enzyme intermediate and the expulsion of a 5'-OH DNA strand. TThe free DNA strand then rotates around the intact phosphodiester bond on the opposing strand, thus removing DNA supercoils. Finally, in the religation step, the DNA 5'-OH attacks the covalent intermediate to expel the active-site tyrosine and restore the DNA phosphodiester backbone. The polypeptide is DNA topoisomerase 1 (top1) (Schizosaccharomyces pombe (strain 972 / ATCC 24843) (Fission yeast)).